The sequence spans 112 residues: Nucleoid-associated protein CPR_0056 (112 aa).

Residues 91 to 100 (ASEETSEKMG) are compositionally biased toward basic and acidic residues. Residues 91–112 (ASEETSEKMGKLTGGMGMPGLF) are disordered. Residues 102-112 (LTGGMGMPGLF) are compositionally biased toward gly residues.

Belongs to the YbaB/EbfC family. Homodimer.

It localises to the cytoplasm. It is found in the nucleoid. Functionally, binds to DNA and alters its conformation. May be involved in regulation of gene expression, nucleoid organization and DNA protection. The polypeptide is Nucleoid-associated protein CPR_0056 (Clostridium perfringens (strain SM101 / Type A)).